Reading from the N-terminus, the 201-residue chain is Peptide deformylase (201 aa).

Fe cation-binding residues include C121 and H163. E164 is an active-site residue. H167 lines the Fe cation pocket.

The protein belongs to the polypeptide deformylase family. Fe(2+) is required as a cofactor.

The catalysed reaction is N-terminal N-formyl-L-methionyl-[peptide] + H2O = N-terminal L-methionyl-[peptide] + formate. Functionally, removes the formyl group from the N-terminal Met of newly synthesized proteins. Requires at least a dipeptide for an efficient rate of reaction. N-terminal L-methionine is a prerequisite for activity but the enzyme has broad specificity at other positions. The protein is Peptide deformylase of Parasynechococcus marenigrum (strain WH8102).